Reading from the N-terminus, the 907-residue chain is Catenin alpha-1 (907 aa).

The span at Val-870–Gln-879 shows a compositional bias: basic and acidic residues. A disordered region spans residues Val-870 to Val-895. Positions Lys-882 to Ile-892 are enriched in basic residues.

This sequence belongs to the vinculin/alpha-catenin family. Interacts with ctnnb1, jupa and cdh2. Interacts with cdh1 during early stages of oogenesis, interaction is no longer present when oocyte develops into the unfertilized egg. In terms of tissue distribution, expressed in the skin (at protein level). Expressed in the ovary.

The protein resides in the cell junction. The protein localises to the adherens junction. It is found in the cytoplasm. It localises to the cytoskeleton. Its subcellular location is the cell membrane. The protein resides in the nucleus. Its function is as follows. Associates with the cytoplasmic domain of a variety of cadherins, forming catenin and cadherin complexes which are further linked to the actin filament network and is thereby involved in cell-cell adhesion. Required for embryonic development, via maintenance of adherens junctions that facilitate the maintenance of the epithelial barrier. This Danio rerio (Zebrafish) protein is Catenin alpha-1.